The primary structure comprises 304 residues: tRNA pseudouridine synthase B (304 aa).

D38 functions as the Nucleophile in the catalytic mechanism.

This sequence belongs to the pseudouridine synthase TruB family. Type 1 subfamily.

The catalysed reaction is uridine(55) in tRNA = pseudouridine(55) in tRNA. Responsible for synthesis of pseudouridine from uracil-55 in the psi GC loop of transfer RNAs. This Geobacter sulfurreducens (strain ATCC 51573 / DSM 12127 / PCA) protein is tRNA pseudouridine synthase B.